Here is a 572-residue protein sequence, read N- to C-terminus: 2-isopropylmalate synthase (572 aa).

Residues 31–305 (PIWMSTDLRD…DPGLDFSNIN (275 aa)) form the Pyruvate carboxyltransferase domain. Positions 40, 244, 246, and 280 each coordinate Mg(2+). The tract at residues 437-572 (NTAPIHYVGH…MNDAAESVGV (136 aa)) is regulatory domain.

Belongs to the alpha-IPM synthase/homocitrate synthase family. LeuA type 2 subfamily. In terms of assembly, homodimer. Mg(2+) is required as a cofactor.

Its subcellular location is the cytoplasm. The catalysed reaction is 3-methyl-2-oxobutanoate + acetyl-CoA + H2O = (2S)-2-isopropylmalate + CoA + H(+). Its pathway is amino-acid biosynthesis; L-leucine biosynthesis; L-leucine from 3-methyl-2-oxobutanoate: step 1/4. Its function is as follows. Catalyzes the condensation of the acetyl group of acetyl-CoA with 3-methyl-2-oxobutanoate (2-ketoisovalerate) to form 3-carboxy-3-hydroxy-4-methylpentanoate (2-isopropylmalate). The polypeptide is 2-isopropylmalate synthase (Paraburkholderia phytofirmans (strain DSM 17436 / LMG 22146 / PsJN) (Burkholderia phytofirmans)).